The primary structure comprises 105 residues: Large ribosomal subunit protein uL24 (105 aa).

It belongs to the universal ribosomal protein uL24 family. Part of the 50S ribosomal subunit.

Its function is as follows. One of two assembly initiator proteins, it binds directly to the 5'-end of the 23S rRNA, where it nucleates assembly of the 50S subunit. One of the proteins that surrounds the polypeptide exit tunnel on the outside of the subunit. The protein is Large ribosomal subunit protein uL24 of Cellvibrio japonicus (strain Ueda107) (Pseudomonas fluorescens subsp. cellulosa).